A 257-amino-acid polypeptide reads, in one-letter code: Neuroendocrine secretory protein 55 (257 aa).

The N-terminal stretch at 1–46 (MDRRSRAQQWRRARHNYNDLCPPIGRRAATALLWLSCSIALLRALA) is a signal peptide. The interval 61 to 257 (SFLNAHHRSA…RKGPIPIRRH (197 aa)) is disordered. Residues 70-82 (AAAAAAAQVLPES) show a composition bias toward low complexity. Over residues 86-103 (ESDHEHEEVEPELARPEC) the composition is skewed to basic and acidic residues. Residues 104 to 139 (LEYDQDDYETETDSETEPESDIESETEIETEPETEP) show a composition bias toward acidic residues. The span at 200–211 (EPQRGPLDQDPR) shows a compositional bias: basic and acidic residues. Residues 227 to 237 (PRRCKTRRPAR) show a composition bias toward basic residues.

The protein belongs to the NESP55 family. Binds keratan sulfate chains. In terms of processing, may be proteolytically processed to give rise to a number of active peptides.

The protein resides in the cytoplasmic vesicle. Its subcellular location is the secretory vesicle. It localises to the secreted. In Mus musculus (Mouse), this protein is Neuroendocrine secretory protein 55.